Reading from the N-terminus, the 217-residue chain is Thiamine-phosphate synthase (217 aa).

Residues 39-43 (QYRDK) and N71 each bind 4-amino-2-methyl-5-(diphosphooxymethyl)pyrimidine. Residues D72 and D91 each contribute to the Mg(2+) site. T110 is a 4-amino-2-methyl-5-(diphosphooxymethyl)pyrimidine binding site. 137–139 (SHT) contributes to the 2-[(2R,5Z)-2-carboxy-4-methylthiazol-5(2H)-ylidene]ethyl phosphate binding site. A 4-amino-2-methyl-5-(diphosphooxymethyl)pyrimidine-binding site is contributed by K140. Residue G167 coordinates 2-[(2R,5Z)-2-carboxy-4-methylthiazol-5(2H)-ylidene]ethyl phosphate.

The protein belongs to the thiamine-phosphate synthase family. Mg(2+) serves as cofactor.

It catalyses the reaction 2-[(2R,5Z)-2-carboxy-4-methylthiazol-5(2H)-ylidene]ethyl phosphate + 4-amino-2-methyl-5-(diphosphooxymethyl)pyrimidine + 2 H(+) = thiamine phosphate + CO2 + diphosphate. The enzyme catalyses 2-(2-carboxy-4-methylthiazol-5-yl)ethyl phosphate + 4-amino-2-methyl-5-(diphosphooxymethyl)pyrimidine + 2 H(+) = thiamine phosphate + CO2 + diphosphate. The catalysed reaction is 4-methyl-5-(2-phosphooxyethyl)-thiazole + 4-amino-2-methyl-5-(diphosphooxymethyl)pyrimidine + H(+) = thiamine phosphate + diphosphate. The protein operates within cofactor biosynthesis; thiamine diphosphate biosynthesis; thiamine phosphate from 4-amino-2-methyl-5-diphosphomethylpyrimidine and 4-methyl-5-(2-phosphoethyl)-thiazole: step 1/1. In terms of biological role, condenses 4-methyl-5-(beta-hydroxyethyl)thiazole monophosphate (THZ-P) and 2-methyl-4-amino-5-hydroxymethyl pyrimidine pyrophosphate (HMP-PP) to form thiamine monophosphate (TMP). The protein is Thiamine-phosphate synthase of Alcanivorax borkumensis (strain ATCC 700651 / DSM 11573 / NCIMB 13689 / SK2).